Consider the following 515-residue polypeptide: Maturase K (515 aa).

The protein belongs to the intron maturase 2 family. MatK subfamily.

The protein localises to the plastid. Its subcellular location is the chloroplast. Functionally, usually encoded in the trnK tRNA gene intron. Probably assists in splicing its own and other chloroplast group II introns. The chain is Maturase K from Pinus halepensis (Aleppo pine).